A 1308-amino-acid polypeptide reads, in one-letter code: D-lysergyl-peptide-synthetase subunit 2 (1308 aa).

The tract at residues 261–658 (EWCRRTPSAV…CRKSTQVKLR (398 aa)) is adenylation (A) domain. A Carrier domain is found at 803–871 (IEEAFQRFFA…ELSELARHTK (69 aa)). O-(pantetheine 4'-phosphoryl)serine is present on Ser-835. Residues 910–1299 (EDVYPCTPLQ…HAAPRTLIGD (390 aa)) are condensation (C) domain.

It belongs to the NRP synthetase family.

It participates in alkaloid biosynthesis; ergot alkaloid biosynthesis. D-lysergyl-peptide-synthetase subunit 2; part of the gene cluster that mediates the biosynthesis of fungal ergot alkaloid. DmaW catalyzes the first step of ergot alkaloid biosynthesis by condensing dimethylallyl diphosphate (DMAP) and tryptophan to form 4-dimethylallyl-L-tryptophan. The second step is catalyzed by the methyltransferase easF that methylates 4-dimethylallyl-L-tryptophan in the presence of S-adenosyl-L-methionine, resulting in the formation of 4-dimethylallyl-L-abrine. The catalase easC and the FAD-dependent oxidoreductase easE then transform 4-dimethylallyl-L-abrine to chanoclavine-I which is further oxidized by EasD in the presence of NAD(+), resulting in the formation of chanoclavine-I aldehyde. Agroclavine dehydrogenase easG then mediates the conversion of chanoclavine-I aldehyde to agroclavine via a non-enzymatic adduct reaction: the substrate is an iminium intermediate that is formed spontaneously from chanoclavine-I aldehyde in the presence of glutathione. The presence of easA is not required to complete this reaction. Further conversion of agroclavine to paspalic acid is a two-step process involving oxidation of agroclavine to elymoclavine and of elymoclavine to paspalic acid, the second step being performed by the elymoclavine oxidase cloA. Paspalic acid is then further converted to D-lysergic acid. Ergopeptines are assembled from D-lysergic acid and three different amino acids by the D-lysergyl-peptide-synthetases composed each of a monomudular and a trimodular nonribosomal peptide synthetase subunit. LpsB and lpsC encode the monomodular subunits responsible for D-lysergic acid activation and incorporation into the ergopeptine backbone. LpsA1 and A2 subunits encode the trimodular nonribosomal peptide synthetase assembling the tripeptide portion of ergopeptines. LpsA1 is responsible for formation of the major ergopeptine, ergotamine, and lpsA2 for alpha-ergocryptine, the minor ergopeptine of the total alkaloid mixture elaborated by C.purpurea. D-lysergyl-tripeptides are assembled by the nonribosomal peptide synthetases and released as N-(D-lysergyl-aminoacyl)-lactams. Cyclolization of the D-lysergyl-tripeptides is performed by the Fe(2+)/2-ketoglutarate-dependent dioxygenase easH which introduces a hydroxyl group into N-(D-lysergyl-aminoacyl)-lactam at alpha-C of the aminoacyl residue followed by spontaneous condensation with the terminal lactam carbonyl group. The polypeptide is D-lysergyl-peptide-synthetase subunit 2 (Claviceps purpurea (Ergot fungus)).